Here is a 336-residue protein sequence, read N- to C-terminus: Fructose-1,6-bisphosphatase class 1 (336 aa).

E90, D112, L114, and D115 together coordinate Mg(2+). Substrate is bound by residues 115 to 118 (DGSS), N211, and K277. A Mg(2+)-binding site is contributed by E283.

This sequence belongs to the FBPase class 1 family. As to quaternary structure, homotetramer. Requires Mg(2+) as cofactor.

The protein localises to the cytoplasm. It carries out the reaction beta-D-fructose 1,6-bisphosphate + H2O = beta-D-fructose 6-phosphate + phosphate. It participates in carbohydrate biosynthesis; gluconeogenesis. The chain is Fructose-1,6-bisphosphatase class 1 from Pseudomonas fluorescens (strain SBW25).